The chain runs to 402 residues: MTTRALDTANENPEQSGSWSGVLAIAVCAFALVASEFLPVSLLTPIANDLGTTEGMAGQGIAISGAFAVLTSLFISSVAGSLNRKTLLLGLTAAMGMSGAIVALAPNYFVYMLGRALIGIVIGGFWSMSAATAMRLVPANDVPRALALVNGGNALATVVAAPLGAWLGTLIGWRGAFLCLVPVALVALAWQWTTLPSMRAGARAPGPGNVFTVFALLKRPGVMLGMLASSLFFMGQFSLFTYVRPFLETVTGVHGAHVSLVLLVIGAAGFIGTLLIDRVLQRRFFQTLVAIPLLMALIALVLTVLGGWPAIVVVLLGLWGLTGTSAPVGWWAWIARVFPEDAEAGGGLFVAVVQLSIALGSTLGGLLFDRTGYQATFFASAAMLLIAAFLTILTARSKAPAG.

12 helical membrane passes run 22–42, 60–80, 86–106, 108–128, 147–167, 170–190, 220–240, 256–276, 296–316, 318–338, 348–368, and 375–395; these read VLAI…PVSL, GIAI…SVAG, TLLL…ALAP, YFVY…FWSM, ALVN…GAWL, LIGW…ALAW, PGVM…FSLF, AHVS…TLLI, ALIA…VVLL, LWGL…ARVF, LFVA…GLLF, and ATFF…ILTA.

It to B.subtilis YwfA.

The protein resides in the cell membrane. In terms of biological role, regulates the expression of oprD which encodes the imipenem-specific porin. In Pseudomonas aeruginosa (strain ATCC 15692 / DSM 22644 / CIP 104116 / JCM 14847 / LMG 12228 / 1C / PRS 101 / PAO1), this protein is Transcription regulatory protein OpdE (opdE).